The primary structure comprises 257 residues: Putative pentatricopeptide repeat-containing protein At1g43010 (257 aa).

PPR repeat units lie at residues Lys-133–Leu-168 and Lys-169–Val-203.

Belongs to the PPR family. P subfamily.

This Arabidopsis thaliana (Mouse-ear cress) protein is Putative pentatricopeptide repeat-containing protein At1g43010.